A 186-amino-acid polypeptide reads, in one-letter code: MFNKNQGSNGGSSSNVGIGADSPYLQKARSGKTEIRELEAVFKKFDVNGDGKISSKELGAIMTSLGHEVPEEELEKAITEIDRKGDGYINFEEFVELNTKGMDQNDVLENLKDAFSVYDIDGNGSISAEELHEVLRSLGDECSIAECRKMIGGVDKDGDGTIDFEEFKIMMTMGSRRDNVMGGGPR.

Residues 1 to 17 are compositionally biased toward low complexity; the sequence is MFNKNQGSNGGSSSNVG. Residues 1–23 form a disordered region; it reads MFNKNQGSNGGSSSNVGIGADSP. 4 consecutive EF-hand domains span residues 33–68, 69–104, 106–141, and 142–177; these read TEIRELEAVFKKFDVNGDGKISSKELGAIMTSLGHE, VPEEELEKAITEIDRKGDGYINFEEFVELNTKGMDQ, DVLENLKDAFSVYDIDGNGSISAEELHEVLRSLGDE, and CSIAECRKMIGGVDKDGDGTIDFEEFKIMMTMGSRR. Ca(2+)-binding residues include aspartate 46, asparagine 48, aspartate 50, lysine 52, and glutamate 57. Aspartate 119, aspartate 121, asparagine 123, serine 125, glutamate 130, aspartate 155, aspartate 157, aspartate 159, threonine 161, and glutamate 166 together coordinate Ca(2+).

Functionally, potential calcium sensor. This chain is Probable calcium-binding protein CML25 (CML25), found in Arabidopsis thaliana (Mouse-ear cress).